Here is a 123-residue protein sequence, read N- to C-terminus: Small ribosomal subunit protein uS12 (123 aa).

A disordered region spans residues 1–24 (MPTINQLIRKERKKQVKKSKSPAL). The span at 10–20 (KERKKQVKKSK) shows a compositional bias: basic residues. 3-methylthioaspartic acid is present on Asp-89.

It belongs to the universal ribosomal protein uS12 family. Part of the 30S ribosomal subunit. Contacts proteins S8 and S17. May interact with IF1 in the 30S initiation complex.

Its function is as follows. With S4 and S5 plays an important role in translational accuracy. Functionally, interacts with and stabilizes bases of the 16S rRNA that are involved in tRNA selection in the A site and with the mRNA backbone. Located at the interface of the 30S and 50S subunits, it traverses the body of the 30S subunit contacting proteins on the other side and probably holding the rRNA structure together. The combined cluster of proteins S8, S12 and S17 appears to hold together the shoulder and platform of the 30S subunit. The chain is Small ribosomal subunit protein uS12 from Sulfurovum sp. (strain NBC37-1).